Consider the following 432-residue polypeptide: MTLAPVQPAGTTVEEAVLAVCRRAKVASRPLRLASRATKDAALHAIADAIEAATERIVTANGEDLARGAADGTSPHLLDRLRLDPQRVAAVAAAVREVAALPDPVGEVVRGSTLPNGLRLRQLRVPMGVLGVVYEARPNVTVDVAVLALKSGNAVVLRGGSAAQSSNTVLVEVVRGALESVGLPADAVTSIDEHGRDGVGALLTARGLVDLLVPRGGADLIQRVVREATVPVIETGVGNCHVYVDASADLAQAVEIVLNAKTSRPSVCNAAETVLVHSALAADFLPTLLRALHEAGVVLHADATSLAAARAAGLPAQPVTDEDWAAEFHGLEIAVGVVDSVQDAVEHIARWTSAHTEAVLATDVRVTDYFCAAVDSAVVAVNASTRFTDGGEFGLGAEVGISTQKLHARGPMGLAELTTTTWQVLGDGHVRV.

Belongs to the gamma-glutamyl phosphate reductase family.

It is found in the cytoplasm. It carries out the reaction L-glutamate 5-semialdehyde + phosphate + NADP(+) = L-glutamyl 5-phosphate + NADPH + H(+). It participates in amino-acid biosynthesis; L-proline biosynthesis; L-glutamate 5-semialdehyde from L-glutamate: step 2/2. Catalyzes the NADPH-dependent reduction of L-glutamate 5-phosphate into L-glutamate 5-semialdehyde and phosphate. The product spontaneously undergoes cyclization to form 1-pyrroline-5-carboxylate. This chain is Gamma-glutamyl phosphate reductase, found in Kineococcus radiotolerans (strain ATCC BAA-149 / DSM 14245 / SRS30216).